A 462-amino-acid polypeptide reads, in one-letter code: Cysteine--tRNA ligase (462 aa).

Cys-30 lines the Zn(2+) pocket. The short motif at Met-32 to His-42 is the 'HIGH' region element. Zn(2+) contacts are provided by Cys-214, His-239, and Glu-243. The 'KMSKS' region motif lies at Lys-271 to Ser-275. Lys-274 contacts ATP.

The protein belongs to the class-I aminoacyl-tRNA synthetase family. In terms of assembly, monomer. The cofactor is Zn(2+).

The protein localises to the cytoplasm. The catalysed reaction is tRNA(Cys) + L-cysteine + ATP = L-cysteinyl-tRNA(Cys) + AMP + diphosphate. The polypeptide is Cysteine--tRNA ligase (Cupriavidus pinatubonensis (strain JMP 134 / LMG 1197) (Cupriavidus necator (strain JMP 134))).